The following is a 385-amino-acid chain: MGERKGQNKYYPPDFNPEKHGSLNRYHNSHPLRERARKLSQGILVIRFEMPYNIWCDGCKNHIGMGVRYNAEKKKVGNYYTTPIYRFRMKCHLCVNYIEMQTDPANCDYVIVSGASRKEERWDMEDNEQVLTTEHEKKEKLETDAMFRLEHGEADRSTLKKALPTLSHIQEAQNAWKDDFALNSMLRRHFREKKKAMQEEEEKDQALQAKASLAIPLVPESEDDRRLAALLRLHTLDSYEDKQRMKRTEIIHRSWFPSAQGPSASSSKASSVLKKLCQGRRPPPSSTGTVGDLGIVRRKSRDVPESPQCAADNSLSEEQRRPPGTTQGSKTLEEAAEASRTSKTSESKRNCSDQAFPLGSSQEDLLNPNTPNASLVADYSDSESE.

The disordered stretch occupies residues 1–26; the sequence is MGERKGQNKYYPPDFNPEKHGSLNRY. Serine 40 bears the Phosphoserine mark. The stretch at 182–214 forms a coiled coil; that stretch reads LNSMLRRHFREKKKAMQEEEEKDQALQAKASLA. The segment at 257–385 is disordered; the sequence is PSAQGPSASS…VADYSDSESE (129 aa). Positions 258–271 are enriched in low complexity; it reads SAQGPSASSSKASS. Phosphoserine is present on serine 306. Over residues 359–373 the composition is skewed to polar residues; it reads GSSQEDLLNPNTPNA.

It belongs to the CWC16 family.

It localises to the nucleus. May be involved in mRNA splicing. This is Probable splicing factor YJU2B (Yju2b) from Mus musculus (Mouse).